A 423-amino-acid polypeptide reads, in one-letter code: Serine--tRNA ligase (423 aa).

Thr-230–Glu-232 lines the L-serine pocket. Arg-261–Glu-263 provides a ligand contact to ATP. Position 284 (Glu-284) interacts with L-serine. Residue Glu-348 to Ser-351 participates in ATP binding. Residue Ser-384 participates in L-serine binding.

This sequence belongs to the class-II aminoacyl-tRNA synthetase family. Type-1 seryl-tRNA synthetase subfamily. As to quaternary structure, homodimer. The tRNA molecule binds across the dimer.

Its subcellular location is the cytoplasm. The catalysed reaction is tRNA(Ser) + L-serine + ATP = L-seryl-tRNA(Ser) + AMP + diphosphate + H(+). It catalyses the reaction tRNA(Sec) + L-serine + ATP = L-seryl-tRNA(Sec) + AMP + diphosphate + H(+). Its pathway is aminoacyl-tRNA biosynthesis; selenocysteinyl-tRNA(Sec) biosynthesis; L-seryl-tRNA(Sec) from L-serine and tRNA(Sec): step 1/1. Functionally, catalyzes the attachment of serine to tRNA(Ser). Is also able to aminoacylate tRNA(Sec) with serine, to form the misacylated tRNA L-seryl-tRNA(Sec), which will be further converted into selenocysteinyl-tRNA(Sec). This Thermoanaerobacter pseudethanolicus (strain ATCC 33223 / 39E) (Clostridium thermohydrosulfuricum) protein is Serine--tRNA ligase.